A 501-amino-acid polypeptide reads, in one-letter code: Ribose import ATP-binding protein RbsA (501 aa).

2 ABC transporter domains span residues 5-241 (LQLK…VGRK) and 252-495 (APGD…VGKL). 37-44 (GENGAGKS) contacts ATP.

This sequence belongs to the ABC transporter superfamily. Ribose importer (TC 3.A.1.2.1) family. The complex is composed of an ATP-binding protein (RbsA), two transmembrane proteins (RbsC) and a solute-binding protein (RbsB).

The protein resides in the cell inner membrane. The catalysed reaction is D-ribose(out) + ATP + H2O = D-ribose(in) + ADP + phosphate + H(+). Its function is as follows. Part of the ABC transporter complex RbsABC involved in ribose import. Responsible for energy coupling to the transport system. The protein is Ribose import ATP-binding protein RbsA of Shigella sonnei (strain Ss046).